Consider the following 488-residue polypeptide: UDP-N-acetylmuramate--L-alanine ligase (488 aa).

ATP is bound at residue glycine 129 to threonine 135.

The protein belongs to the MurCDEF family.

It is found in the cytoplasm. It catalyses the reaction UDP-N-acetyl-alpha-D-muramate + L-alanine + ATP = UDP-N-acetyl-alpha-D-muramoyl-L-alanine + ADP + phosphate + H(+). The protein operates within cell wall biogenesis; peptidoglycan biosynthesis. Cell wall formation. The protein is UDP-N-acetylmuramate--L-alanine ligase of Prochlorococcus marinus (strain MIT 9303).